Here is a 424-residue protein sequence, read N- to C-terminus: Nuclear hormone receptor family member nhr-55 (424 aa).

The segment covering 1–19 (MNSPSSSSSFCSSSSSPSS) has biased composition (low complexity). The interval 1-20 (MNSPSSSSSFCSSSSSPSSL) is disordered. The nuclear receptor DNA-binding region spans 25 to 100 (PDTCQVCGQK…VGMTIENFQF (76 aa)). 2 NR C4-type zinc fingers span residues 28–55 (CQVC…FRRC) and 64–88 (CRRN…LKKC). One can recognise an NR LBD domain in the interval 169-424 (EVPLHTPNAL…FSHPEVFIDL (256 aa)).

The protein belongs to the nuclear hormone receptor family.

The protein resides in the nucleus. Its function is as follows. Orphan nuclear receptor. The polypeptide is Nuclear hormone receptor family member nhr-55 (nhr-55) (Caenorhabditis elegans).